Here is a 415-residue protein sequence, read N- to C-terminus: Autophagy-related protein 19 (415 aa).

The ATG11-binding stretch occupies residues 21-28 (YDECNKFQ). Residues 126 to 135 (CREDAHEDPV) are compositionally biased toward basic and acidic residues. Residues 126–150 (CREDAHEDPVSPKAGSEEEISPNST) are disordered. Serine 136 and serine 141 each carry phosphoserine. The stretch at 157 to 187 (RECLDNFMKQLLKLEESLNKLELEQKVTNKE) forms a coiled coil. Glycyl lysine isopeptide (Lys-Gly) (interchain with G-Cter in ubiquitin) cross-links involve residues lysine 213 and lysine 216. Serine 243 carries the phosphoserine modification. The interval 254–367 (VEPPNERSLQ…LRPPSRLSAE (114 aa)) is AMS1-binding. Residues 406-415 (NEKALTWEEL) are ATG8-binding. The WXXL signature appears at 412 to 415 (WEEL).

In terms of assembly, interacts with the vacuolar aminopeptidase 1 (LAP4) precursor and mature forms. Also interacts with AMS1, APE4, ATG8 ATG11, and UBP3. Polyubiquitinated at Lys-213 and Lys-216. Deubiquitination by UBP3 is required for full activity of ATG19.

It localises to the preautophagosomal structure membrane. Its function is as follows. Cargo-receptor protein involved in the cytoplasm to vacuole transport (Cvt) and in autophagy. Recognizes cargo proteins, such as APE4, LAP3, LAP4 and AMS1 and delivers them to the pre-autophagosomal structure for eventual engulfment by the autophagosome and targeting to the vacuole. Involved in the organization of the preautophagosomal structure (PAS). ATG19 association with cargo protein is required to localize ATG11 to the PAS. Also involved in endoplasmic reticulum-specific autophagic process, in selective removal of ER-associated degradation (ERAD) substrates, and is essential for the survival of cells subjected to severe ER stress. Also plays a role in regulation of filamentous growth. The protein is Autophagy-related protein 19 (ATG19) of Saccharomyces cerevisiae (strain YJM789) (Baker's yeast).